The following is a 492-amino-acid chain: Catalase-2 (492 aa).

Active-site residues include H65 and N138. Y348 is a binding site for heme.

Belongs to the catalase family. As to quaternary structure, homotetramer and heterotetramer. At least six or seven isozymes are produced from a mixture of 3 gene products. Interacts with NCA1. Interacts with LSD1. It depends on heme as a cofactor.

The protein resides in the cytoplasm. The protein localises to the cytosol. It localises to the peroxisome matrix. The enzyme catalyses 2 H2O2 = O2 + 2 H2O. Catalyzes the degradation of hydrogen peroxide (H(2)O(2)) generated by peroxisomal oxidases to water and oxygen, thereby protecting cells from the toxic effects of hydrogen peroxide. The chain is Catalase-2 (CAT2) from Arabidopsis thaliana (Mouse-ear cress).